The following is a 148-amino-acid chain: Cystatin-C (148 aa).

The signal sequence occupies residues 1–30 (MVGSPRAPLLLLASLIVALALALAVSPAAA). A Pyrrolidone carboxylic acid modification is found at Gln31. The short motif at 84 to 88 (QVVSG) is the Secondary area of contact element. 2 disulfides stabilise this stretch: Cys102–Cys112 and Cys126–Cys146.

The protein localises to the secreted. Functionally, this is a thiol proteinase inhibitor. The chain is Cystatin-C (CST3) from Bos taurus (Bovine).